Reading from the N-terminus, the 336-residue chain is MNIATELFVVTFKIIWSFVLAGAKWFIRPREKSVEGQVCVITGAGSGLGRLFALEFARRRATLVLWDINRQSNEETAEMAREIYRQLKPSTGSSDSVQELPLLQPKVYTYMCDVSKRESVYLTAEKVRSEVGDIDLLINNAGVVSGRHLLDCPDELIERTMMVNCHAHFWTTKAFLPKMLELNHGHIVTVASSLGLFTTAGVEDYCASKFGAIGFHESLSHELKAADKDGIKMTLVCPFLVDTGMFEGCKIRKEMAPFFPPLKPEYCVKQAMRAILTDQPMICTPRVMYMVTFMKTVLPFDAIVCMYKFIGADKCMYPFLAQRKESTNNNESKTGI.

A helical; Signal-anchor transmembrane segment spans residues leucine 7–isoleucine 27. Valine 40–valine 64 is a binding site for NADP(+). Serine 192 is a binding site for substrate. Tyrosine 205 acts as the Proton acceptor in catalysis.

The protein belongs to the short-chain dehydrogenases/reductases (SDR) family.

The protein localises to the microsome membrane. It is found in the endoplasmic reticulum membrane. It catalyses the reaction all-trans-retinol + NADP(+) = all-trans-retinal + NADPH + H(+). It participates in cofactor metabolism; retinol metabolism. Functionally, retinol dehydrogenase with a clear preference for NADP. Converts all-trans-retinol to all-trans-retinal. Has no detectable activity towards 11-cis-retinol, 9-cis-retinol and 13-cis-retinol. This chain is Retinol dehydrogenase 10-B (rdh10b), found in Danio rerio (Zebrafish).